A 389-amino-acid chain; its full sequence is Succinate--CoA ligase [ADP-forming] subunit beta (389 aa).

The ATP-grasp domain maps to 9 to 244; the sequence is KQLFAEYGLP…PSQEDEREAH (236 aa). Residues lysine 46, 53-55, glutamate 99, threonine 102, and glutamate 107 each bind ATP; that span reads GRG. The Mg(2+) site is built by asparagine 199 and aspartate 213. Substrate is bound by residues asparagine 264 and 321–323; that span reads GIV.

The protein belongs to the succinate/malate CoA ligase beta subunit family. As to quaternary structure, heterotetramer of two alpha and two beta subunits. Mg(2+) is required as a cofactor.

The enzyme catalyses succinate + ATP + CoA = succinyl-CoA + ADP + phosphate. The catalysed reaction is GTP + succinate + CoA = succinyl-CoA + GDP + phosphate. Its pathway is carbohydrate metabolism; tricarboxylic acid cycle; succinate from succinyl-CoA (ligase route): step 1/1. Its function is as follows. Succinyl-CoA synthetase functions in the citric acid cycle (TCA), coupling the hydrolysis of succinyl-CoA to the synthesis of either ATP or GTP and thus represents the only step of substrate-level phosphorylation in the TCA. The beta subunit provides nucleotide specificity of the enzyme and binds the substrate succinate, while the binding sites for coenzyme A and phosphate are found in the alpha subunit. This Teredinibacter turnerae (strain ATCC 39867 / T7901) protein is Succinate--CoA ligase [ADP-forming] subunit beta.